A 247-amino-acid polypeptide reads, in one-letter code: 23S rRNA (guanosine-2'-O-)-methyltransferase RlmB (247 aa).

S-adenosyl-L-methionine is bound by residues Gly-197, Ile-217, and Leu-226.

The protein belongs to the class IV-like SAM-binding methyltransferase superfamily. RNA methyltransferase TrmH family. RlmB subfamily.

The protein localises to the cytoplasm. The enzyme catalyses guanosine(2251) in 23S rRNA + S-adenosyl-L-methionine = 2'-O-methylguanosine(2251) in 23S rRNA + S-adenosyl-L-homocysteine + H(+). Its function is as follows. Specifically methylates the ribose of guanosine 2251 in 23S rRNA. This is 23S rRNA (guanosine-2'-O-)-methyltransferase RlmB from Vibrio vulnificus (strain CMCP6).